A 135-amino-acid chain; its full sequence is Retinol-binding protein 5 (135 aa).

The protein belongs to the calycin superfamily. Fatty-acid binding protein (FABP) family. In terms of tissue distribution, kidney.

The protein localises to the cytoplasm. Functionally, intracellular transport of retinol. The protein is Retinol-binding protein 5 (RBP5) of Bos taurus (Bovine).